Here is a 294-residue protein sequence, read N- to C-terminus: MDQYEKVEKIGEGTYGVVYKARDKVTNETIALKKIRLEQEDEGVPSTAIREISLLKEMQHSNIVKLQDVVHSEKRLYLVFEYLDLDLKKHMDSTPDFSKDLHMIKTYLYQILRGIAYCHSHRVLHRDLKPQNLLIDRRTNSLKLADFGLARAFGIPVRTFTHEVVTLWYRAPEILLGSHHYSTPVDIWSVGCIFAEMISQKPLFPGDSEIDQLFKIFRIMGTPYEDTWRGVTSLPDYKSAFPKWKPTDLETFVPNLDPDGVDLLSKMLLMDPTKRINARAALEHEYFKDLGGMP.

A Protein kinase domain is found at 4 to 287 (YEKVEKIGEG…ARAALEHEYF (284 aa)). ATP-binding positions include 10 to 18 (IGEGTYGVV) and K33. A Phosphotyrosine modification is found at Y15. D127 acts as the Proton acceptor in catalysis. A Phosphothreonine modification is found at T161.

This sequence belongs to the protein kinase superfamily. CMGC Ser/Thr protein kinase family. CDC2/CDKX subfamily. In terms of assembly, interacts with CDT1A, CYCA2-3, CYCD2-1, CYCD3-1, CYCD4-1, CYCD4-2, CYCH1-1, CYCU1-1, CYCU2-1, CYCU2-2, CYCU3-1, CYCU4-1, CYCU4-2, CYCU4-3, CKS1, KRP2/ICK2, KRP3/ICK6, KRP4/ICK7, KRP6/ICK4, KRP7/ICK5, and C-terminal domain of KRP1/ICK1. Interacts with WEE1 and TIF4A-1/EIF4A-1. Interacts with PAS2; when phosphorylated at Tyr-15. Interacts with SMR3, SMR4, SMR5, SMR6, SMR8 and At4g14310. Binds to CYCD3-2. Component of a DREAM-like complex which modulates a variety of developmentally regulated genes and of the mitotic genes in proliferating and differentiated cells. Interacts with MYB3R3 at later and with MYB3R4 at earlier stages of leaf development. May interact with SPCH. Post-translationally, phosphorylated at Tyr-15 by WEE1. Phosphorylation at Thr-161 is important for the kinase activity and substrate binding. Binding to the anti-phosphatase PAS2 prevents dephosphorylation. As to expression, expressed in roots, stems, flowers and siliques.

The protein localises to the cytoplasm. The protein resides in the nucleus. It carries out the reaction L-seryl-[protein] + ATP = O-phospho-L-seryl-[protein] + ADP + H(+). The enzyme catalyses L-threonyl-[protein] + ATP = O-phospho-L-threonyl-[protein] + ADP + H(+). The catalysed reaction is [DNA-directed RNA polymerase] + ATP = phospho-[DNA-directed RNA polymerase] + ADP + H(+). CDK kinase activated by CDKF-1. CDK kinase activity inhibited by KRP1/ICK1, KRP2/ICK2, KRP3/ICK6, KRP4/ICK7, KRP5/ICK3, KRP6/ICK4 and KRP7/ICK5. Down-regulated by phosphorylation by WEE1. Functionally, involved in the control of the cell cycle. Essential for both G1/S and G2/M (mitosis) phase transitions. Functions in cell morphogenesis as well as cell proliferation. Required for cell division (entry into mitosis) of the generative cell in male gametogenesis. Required to trigger guard mother cells (GMC) symmetric divisions at the late stage of stomatal development, probably via the regulation of G1 to S transition in the cell cycle. Required for the function of SPCH in entering the stomatal lineage. Promotes divisions in the guard cells (GCs) after the guard mother cells (GMC) symmetric division when in the presence of CYCD3-2 via the phosphorylation of SPCH. The chain is Cyclin-dependent kinase A-1 from Arabidopsis thaliana (Mouse-ear cress).